The chain runs to 145 residues: MKLKVTKLEKAAILPKYVHSDDSGLDLSAIEDLEIPPGESQLVPTGIAIELPPNTEAQIRPRSGLALKHQITVLNTPGTVDEGYRGEIGVILINHGKNSFKVTRGMKIAQMVIAPVIRVEVEEVDHLSDTTRGSGGFGSTGLTSD.

Substrate is bound by residues 62 to 64 (RSG), N75, and 79 to 81 (TVD).

The protein belongs to the dUTPase family. Mg(2+) serves as cofactor.

The catalysed reaction is dUTP + H2O = dUMP + diphosphate + H(+). The protein operates within pyrimidine metabolism; dUMP biosynthesis; dUMP from dCTP (dUTP route): step 2/2. This enzyme is involved in nucleotide metabolism: it produces dUMP, the immediate precursor of thymidine nucleotides and it decreases the intracellular concentration of dUTP so that uracil cannot be incorporated into DNA. This chain is Deoxyuridine 5'-triphosphate nucleotidohydrolase, found in Gloeothece citriformis (strain PCC 7424) (Cyanothece sp. (strain PCC 7424)).